The primary structure comprises 376 residues: Glutamate 5-kinase (376 aa).

Position 15 (lysine 15) interacts with ATP. The substrate site is built by serine 56, aspartate 143, and asparagine 155. 175-176 is a binding site for ATP; it reads SD. The PUA domain maps to 281–358; it reads KGTLTIDAGA…PDVMSILGVS (78 aa).

It belongs to the glutamate 5-kinase family.

The protein resides in the cytoplasm. The catalysed reaction is L-glutamate + ATP = L-glutamyl 5-phosphate + ADP. It participates in amino-acid biosynthesis; L-proline biosynthesis; L-glutamate 5-semialdehyde from L-glutamate: step 1/2. Its function is as follows. Catalyzes the transfer of a phosphate group to glutamate to form L-glutamate 5-phosphate. The chain is Glutamate 5-kinase from Rhodopseudomonas palustris (strain HaA2).